The following is a 695-amino-acid chain: Probable glucan endo-1,3-beta-glucosidase btgC (695 aa).

Disordered stretches follow at residues 1–53 (MSGP…THHG), 117–140 (RRGT…GSDN), 175–258 (GPAG…RSQA), and 286–314 (ETSY…STGS). Topologically, residues 1-317 (MSGPHRTFSF…PKPSTGSRKR (317 aa)) are cytoplasmic. Residues 36–45 (PISNMSSSPG) are compositionally biased toward polar residues. Residues 188 to 198 (HLGTSNSSQRN) show a composition bias toward polar residues. A compositionally biased stretch (acidic residues) spans 231 to 241 (NPEEIADDGDD). The chain crosses the membrane as a helical; Signal-anchor for type II membrane protein span at residues 318-338 (GWIIGAILAVIIIGAIVGGAV). Over 339-695 (GGTIGHKDSG…IPDCGGKTAA (357 aa)) the chain is Extracellular. Residues 346-372 (DSGDSASGSSASTQSASGDTDTNGDLD) are disordered. Residues 349–366 (DSASGSSASTQSASGDTD) show a composition bias toward low complexity. N-linked (GlcNAc...) asparagine glycosylation is found at asparagine 415, asparagine 438, and asparagine 466. Glutamate 498 (proton donor) is an active-site residue. Glutamate 597 (nucleophile) is an active-site residue. Asparagine 642 carries N-linked (GlcNAc...) asparagine glycosylation.

This sequence belongs to the glycosyl hydrolase 17 family.

It localises to the cell membrane. The catalysed reaction is Hydrolysis of (1-&gt;3)-beta-D-glucosidic linkages in (1-&gt;3)-beta-D-glucans.. Functionally, glucanases play a role in cell expansion during growth, in cell-cell fusion during mating, and in spore release during sporulation. This enzyme may be involved in beta-glucan degradation. Active on laminarin and lichenan. This is Probable glucan endo-1,3-beta-glucosidase btgC (btgC) from Aspergillus clavatus (strain ATCC 1007 / CBS 513.65 / DSM 816 / NCTC 3887 / NRRL 1 / QM 1276 / 107).